The primary structure comprises 127 residues: Class I hydrophobin 1 (127 aa).

Positions 1–20 (MLSLLSKAVSLAILVTAVVA) are cleaved as a signal peptide. 4 disulfides stabilise this stretch: cysteine 53-cysteine 108, cysteine 60-cysteine 102, cysteine 61-cysteine 94, and cysteine 109-cysteine 122. An N-linked (GlcNAc...) asparagine glycan is attached at asparagine 66.

The protein belongs to the fungal hydrophobin family. In terms of assembly, self-assembles to form functional amyloid fibrils called rodlets. Self-assembly into fibrillar rodlets occurs spontaneously at hydrophobic:hydrophilic interfaces and the rodlets further associate laterally to form amphipathic monolayers. In terms of tissue distribution, expressed everywhere in the mycelial tissues of developing fruiting bodies except for the top parts of the pileus (cap) and for the prehymenophore; but high level of the transcript is detected in the parts surrounding the prehymenophore.

The protein resides in the secreted. It localises to the cell wall. Aerial growth, conidiation, and dispersal of filamentous fungi in the environment rely upon a capability of their secreting small amphipathic proteins called hydrophobins (HPBs) with low sequence identity. Class I can self-assemble into an outermost layer of rodlet bundles on aerial cell surfaces, conferring cellular hydrophobicity that supports fungal growth, development and dispersal; whereas Class II form highly ordered films at water-air interfaces through intermolecular interactions but contribute nothing to the rodlet structure. Hyd1 is a class I hydrophobin that plays a role in fruiting body initiation rather than in mature fruit body maintenance. Seems to be involved in the formation in the extracellular matrix of lined air channels with a hydrophobic membrane. These channels may help to provide gas exchange during respiration in mycelial tissues of developing fruiting bodies and are formed all over the mycelial tissues of these developing fruiting bodies except for the top parts of the pileus (cap) and for the prehymenophore. The polypeptide is Class I hydrophobin 1 (Lentinula edodes (Shiitake mushroom)).